Here is a 150-residue protein sequence, read N- to C-terminus: 1,4-dihydroxy-2-naphthoyl-CoA hydrolase (150 aa).

Asp-19 is a catalytic residue.

It belongs to the 4-hydroxybenzoyl-CoA thioesterase family. DHNA-CoA hydrolase subfamily.

The enzyme catalyses 1,4-dihydroxy-2-naphthoyl-CoA + H2O = 1,4-dihydroxy-2-naphthoate + CoA + H(+). The protein operates within cofactor biosynthesis; phylloquinone biosynthesis. It participates in quinol/quinone metabolism; 1,4-dihydroxy-2-naphthoate biosynthesis; 1,4-dihydroxy-2-naphthoate from chorismate: step 7/7. In terms of biological role, catalyzes the hydrolysis of 1,4-dihydroxy-2-naphthoyl-CoA (DHNA-CoA) to 1,4-dihydroxy-2-naphthoate (DHNA), a reaction involved in phylloquinone (vitamin K1) biosynthesis. This is 1,4-dihydroxy-2-naphthoyl-CoA hydrolase from Prochlorococcus marinus (strain MIT 9215).